Here is a 444-residue protein sequence, read N- to C-terminus: Probable D-serine dehydratase (444 aa).

Lys-118 is subject to N6-(pyridoxal phosphate)lysine.

This sequence belongs to the serine/threonine dehydratase family. DsdA subfamily. The cofactor is pyridoxal 5'-phosphate.

The catalysed reaction is D-serine = pyruvate + NH4(+). The sequence is that of Probable D-serine dehydratase from Acinetobacter baumannii (strain ACICU).